Consider the following 209-residue polypeptide: Response regulator protein VraR (209 aa).

Residues 4 to 120 (KVLFVDDHEM…DIADAVRKTS (117 aa)) enclose the Response regulatory domain. Position 55 is a 4-aspartylphosphate (Asp-55). The region spanning 141–206 (RAELYEMLTE…QAVIYAFQHN (66 aa)) is the HTH luxR-type domain. The segment at residues 165-184 (NQEIASASHITIKTVKTHVS) is a DNA-binding region (H-T-H motif).

As to quaternary structure, homodimer. Post-translationally, phosphorylated by VraS. Phosphorylation state of VraR controls dimerization of the protein.

In terms of biological role, member of the two-component regulatory system VraS/VraR involved in the control of the cell wall peptidoglycan biosynthesis. Upon cellular stress, the histidine kinase VraS transfers the phosphoryl group onto VraR. Upon phosphorylation, VraR dimerizes at the N-terminal domain. In turn, phosphorylation-induced dimerization expand and enhance the VraR binding to its own promoter leading to increased expression and subsequent modulation of as many as 40 genes, which ultimately constitute the S.aureus response to cell wall damage. In addition, inhibits the host autophagic flux and delays the early stage of autophagosome formation, thereby promoting bacterial survival. Facilitates the ability of S.aureus to resist host polymorphonuclear leukocytes-mediated phagocytosis and killing thus contributing to immune evasion. This chain is Response regulator protein VraR (vraR), found in Staphylococcus aureus (strain NCTC 8325 / PS 47).